We begin with the raw amino-acid sequence, 40 residues long: Photosystem II reaction center protein J (40 aa).

A helical membrane pass occupies residues 8–28 (IPLWLISTVTGTLVIGLMGIF).

The protein belongs to the PsbJ family. In terms of assembly, PSII is composed of 1 copy each of membrane proteins PsbA, PsbB, PsbC, PsbD, PsbE, PsbF, PsbH, PsbI, PsbJ, PsbK, PsbL, PsbM, PsbT, PsbX, PsbY, PsbZ, Psb30/Ycf12, at least 3 peripheral proteins of the oxygen-evolving complex and a large number of cofactors. It forms dimeric complexes.

It localises to the plastid. It is found in the chloroplast thylakoid membrane. Its function is as follows. One of the components of the core complex of photosystem II (PSII). PSII is a light-driven water:plastoquinone oxidoreductase that uses light energy to abstract electrons from H(2)O, generating O(2) and a proton gradient subsequently used for ATP formation. It consists of a core antenna complex that captures photons, and an electron transfer chain that converts photonic excitation into a charge separation. The polypeptide is Photosystem II reaction center protein J (Ginkgo biloba (Ginkgo)).